Consider the following 124-residue polypeptide: Small ribosomal subunit protein bS6 (124 aa).

Belongs to the bacterial ribosomal protein bS6 family.

Functionally, binds together with bS18 to 16S ribosomal RNA. The protein is Small ribosomal subunit protein bS6 of Rippkaea orientalis (strain PCC 8801 / RF-1) (Cyanothece sp. (strain PCC 8801)).